The primary structure comprises 427 residues: MEANMSFENDYYSPIQLFAEIEAYANTMDKSPDLDILRTIEEFDETLLSEIEVRTQSIPSPLVAPSVTKMSLPSPSPAPPNSLYTRLLHELDFVEGPSILARLEKINVDLFSCFPHNKHLYEHAKILSVSPSEVLEELSKNTWTYTALNLNEHGEMALPMPPTTKADLPSYVDDIQNFYLGELEAREKSYATMFYGYCRALAEYIRQSAIKDLRDARVEDKNIGACSKARQYIAERYYREAARFAKLLYVHLYLSTTRDVSQRLEASQMGRQNIFVYLKCEWLQERHFHCLFQPVIFNHGVVIVEGRVLTAPELRAQNYIRSEFGLPLIRCKLVEEPDMPLISPPPFSGDAPRASVYLLQCIRSKLEVYSLSHPPNPQLHVHKEHVHVQKLESPPNYGTTVEALLMDSSDRNSISPGDPVATTISTL.

This sequence belongs to the herpesviridae tegument protein VP16 protein family.

It is found in the virion tegument. Its subcellular location is the host nucleus. Functionally, transcriptional activator of immediate-early (IE) gene products (alpha genes). Acts as a key activator of lytic infection by initiating the lytic program through the assembly of the transcriptional regulatory VP16-induced complex composed of VP16 and two cellular factors, HCFC1 and POU2F1. VP16-induced complex represents a regulatory switch: when it is on, it promotes IE-gene expression and thus lytic infection, and when it is off, it limits IE-gene transcription favoring latent infection. Its function is as follows. May play a role in the aggregation of tegument proteins around nucleocapsids during virus morphogenesis. This Gallus gallus (Chicken) protein is Tegument protein VP16 homolog (MDV061).